We begin with the raw amino-acid sequence, 211 residues long: Protein-methionine-sulfoxide reductase heme-binding subunit MsrQ (211 aa).

5 consecutive transmembrane segments (helical) span residues 8-28 (VIWL…WLVW), 54-74 (FLLA…PLLI), 82-102 (LWCF…ELGV), 116-136 (PYLT…FTST), and 153-173 (FVYL…KIIS).

The protein belongs to the MsrQ family. In terms of assembly, heterodimer of a catalytic subunit (MsrP) and a heme-binding subunit (MsrQ). The cofactor is FMN. Heme b is required as a cofactor.

The protein resides in the cell inner membrane. Part of the MsrPQ system that repairs oxidized periplasmic proteins containing methionine sulfoxide residues (Met-O), using respiratory chain electrons. Thus protects these proteins from oxidative-stress damage caused by reactive species of oxygen and chlorine generated by the host defense mechanisms. MsrPQ is essential for the maintenance of envelope integrity under bleach stress, rescuing a wide series of structurally unrelated periplasmic proteins from methionine oxidation, including the primary periplasmic chaperone SurA and the lipoprotein Pal. MsrQ provides electrons for reduction to the reductase catalytic subunit MsrP, using the quinone pool of the respiratory chain. The protein is Protein-methionine-sulfoxide reductase heme-binding subunit MsrQ of Escherichia coli O6:K15:H31 (strain 536 / UPEC).